Consider the following 699-residue polypeptide: Elongation factor G (699 aa).

One can recognise a tr-type G domain in the interval 8 to 288; sequence EDYRNFGIMA…AVVDYLPSPL (281 aa). Residues 17–24, 86–90, and 140–143 each bind GTP; these read AHIDAGKT, DTPGH, and NKMD.

It belongs to the TRAFAC class translation factor GTPase superfamily. Classic translation factor GTPase family. EF-G/EF-2 subfamily.

Its subcellular location is the cytoplasm. Catalyzes the GTP-dependent ribosomal translocation step during translation elongation. During this step, the ribosome changes from the pre-translocational (PRE) to the post-translocational (POST) state as the newly formed A-site-bound peptidyl-tRNA and P-site-bound deacylated tRNA move to the P and E sites, respectively. Catalyzes the coordinated movement of the two tRNA molecules, the mRNA and conformational changes in the ribosome. The chain is Elongation factor G from Rhizobium rhizogenes (strain K84 / ATCC BAA-868) (Agrobacterium radiobacter).